The following is a 183-amino-acid chain: Putative calmodulin-like protein 2 (183 aa).

4 consecutive EF-hand domains span residues 7–42 (EQIA…LGQS), 43–78 (PTEA…KLRD), 80–115 (GAED…LGDP), and 116–151 (LSDD…KRRQ). Aspartate 20, aspartate 22, aspartate 24, threonine 26, glutamate 31, aspartate 56, aspartate 58, serine 60, serine 62, glutamate 67, aspartate 93, aspartate 95, asparagine 97, glutamate 104, aspartate 129, aspartate 131, aspartate 133, glutamine 135, and glutamate 140 together coordinate Ca(2+). Residues 154–183 (MEGHGSGGHRSSNSHKKSGCCGPNSSCTIL) are disordered. 2 S-palmitoyl cysteine lipidation sites follow: cysteine 173 and cysteine 174. The residue at position 180 (cysteine 180) is a Cysteine methyl ester. Cysteine 180 carries the S-farnesyl cysteine lipid modification. A propeptide spans 181–183 (TIL) (removed in mature form).

It belongs to the calmodulin family.

Its subcellular location is the membrane. Potential calcium sensor. In Oryza sativa subsp. japonica (Rice), this protein is Putative calmodulin-like protein 2 (CML2).